Consider the following 378-residue polypeptide: MAVVDVHRFAESITCHAWSPDLSMVALCPNNTEVHIYKSLSQDHWERLHVLQKHDQIVSGIDWSSKSNKIVTVSHDRNSYVWSLEGAEWVPTLVILRLNRAALCVQWSPKENKFAVGSGAKTVCICYYEQENNWWVSKLIRKRHESSVTSVAWHPNNVLLATTSTDGKCRVFSTFIKGVDTKDSKAGSPAETKFGEQILQLDLSYSWAFGVKWSPSGNTLAYVGHSSMIYFVDDVGPSPLAQSVAFRDLPLRDVLFISEKMVIGVGYDSNPMVFASDDTGIWSFIRYIGEKKAASSNSSYSSQFSEAFGKFYGSQSKSTTANDASESRGGVHDNCINSIVSLSKAGSPKVMRFSTSGLDGKVAIWDLENMEQELGNQF.

WD repeat units lie at residues 8 to 47 (RFAESITCHAWSPDLSMVALCPNNTEVHIYKSLSQDHWER), 53 to 92 (KHDQIVSGIDWSSKSNKIVTVSHDRNSYVWSLEGAEWVPT), 97 to 138 (RLNR…WVSK), 143 to 182 (RHESSVTSVAWHPNNVLLATTSTDGKCRVFSTFIKGVDTK), 203 to 242 (LSYSWAFGVKWSPSGNTLAYVGHSSMIYFVDDVGPSPLAQ), 257 to 295 (ISEKMVIGVGYDSNPMVFASDDTGIWSFIRYIGEKKAAS), and 331 to 375 (VHDN…QELG).

Belongs to the WD repeat ARPC1 family. Component of the Arp2/3 complex composed of ARP2, ARP3, ARPC1/p41-ARC, ARPC2/p34-ARC, ARPC3/p21-ARC, ARPC4/p20-ARC and ARPC5/p16-ARC. Expressed at low levels in all tissues with a relatively highest expression in inflorescences.

The protein localises to the cytoplasm. The protein resides in the cytoskeleton. In terms of biological role, functions as a component of the Arp2/3 complex which is involved in regulation of actin polymerization and together with an activating nucleation-promoting factor (NPF) mediates the formation of branched actin networks. Arp2/3 complex plays a critical role in the control of cell morphogenesis via the modulation of cell polarity development. The sequence is that of Actin-related protein 2/3 complex subunit 1A (ARPC1A) from Arabidopsis thaliana (Mouse-ear cress).